Reading from the N-terminus, the 268-residue chain is Putative carbamate hydrolase RutD (268 aa).

The AB hydrolase-1 domain maps to 24–243 (VILSAGLGGS…NATLDIAPWG (220 aa)).

The protein belongs to the AB hydrolase superfamily. Hydrolase RutD family.

The catalysed reaction is carbamate + 2 H(+) = NH4(+) + CO2. In terms of biological role, involved in pyrimidine catabolism. May facilitate the hydrolysis of carbamate, a reaction that can also occur spontaneously. This Caulobacter sp. (strain K31) protein is Putative carbamate hydrolase RutD.